A 358-amino-acid chain; its full sequence is Aromatic amino acid aminotransferase (358 aa).

Lys214 carries the N6-(pyridoxal phosphate)lysine modification.

Belongs to the class-II pyridoxal-phosphate-dependent aminotransferase family. As to quaternary structure, homodimer. The cofactor is pyridoxal 5'-phosphate.

It catalyses the reaction an aromatic L-alpha-amino acid + 2-oxoglutarate = an aromatic oxo-acid + L-glutamate. Its function is as follows. Aminotransferase that catalyzes the conversion of aromatic amino acids and 2-oxoglutarate into corresponding aromatic oxo acids and L-glutamate. The polypeptide is Aromatic amino acid aminotransferase (Rhodococcus opacus (strain B4)).